The sequence spans 160 residues: Transcriptional repressor NrdR (160 aa).

Residues 1–11 show a composition bias toward polar residues; the sequence is MRCPNCNSLDT. The disordered stretch occupies residues 1–20; that stretch reads MRCPNCNSLDTQVKDSRPTE. The segment at 3 to 34 is a zinc-finger region; that stretch reads CPNCNSLDTQVKDSRPTEDSSVIRRRRVCIAC. The ATP-cone domain occupies 49-139; that stretch reads LIVIKRNGRR…VYRNFREAKD (91 aa).

Belongs to the NrdR family. Zn(2+) is required as a cofactor.

In terms of biological role, negatively regulates transcription of bacterial ribonucleotide reductase nrd genes and operons by binding to NrdR-boxes. This chain is Transcriptional repressor NrdR, found in Rhodopseudomonas palustris (strain ATCC BAA-98 / CGA009).